Consider the following 375-residue polypeptide: MPFSAASSSSVSSIAEEPPPKKQHDPSPSCSSYLLLLPDEIILNCLARLPKCYYPVISLVSKTFRRLIASPEIYVERSLLRRTERVLYVVLRSHATETPRWYTLNFKPFGNDSNNHRLVPIPSFPSIPCWGMSIVAIDSEIYVLGGCIDNELVSTGFVVECPSHTCRLLPSMKQARGCAAVGFFDGKLYVIGGCNPLSVNWVEAFDLKTQTWESGLGVNNVEMHDLTIRSFAIDDKIYIMDRKNSFVYDPKEGTLETDELLDTQWSVGSCVIDGKIYTFGSKNRIWVFDPIAMVWDRLKGLDDLPDKRDGSRMSNLGGNLAIMFNLEKGSTKICCTEIRLERREGGKIWGTVLWSNIVITLKEPSTIVRCLTVTV.

Residues 1–15 (MPFSAASSSSVSSIA) show a composition bias toward low complexity. The segment at 1–27 (MPFSAASSSSVSSIAEEPPPKKQHDPS) is disordered. An F-box domain is found at 31–77 (SSYLLLLPDEIILNCLARLPKCYYPVISLVSKTFRRLIASPEIYVER). Kelch repeat units follow at residues 140 to 186 (EIYV…FFDG), 187 to 232 (KLYV…RSFA), and 275 to 321 (KIYT…GNLA).

The polypeptide is F-box/kelch-repeat protein At4g39240 (Arabidopsis thaliana (Mouse-ear cress)).